Consider the following 282-residue polypeptide: Probable ribosomal RNA small subunit methyltransferase A (282 aa).

The S-adenosyl-L-methionine site is built by histidine 24, leucine 26, glycine 51, glutamate 72, aspartate 100, and asparagine 115.

Belongs to the class I-like SAM-binding methyltransferase superfamily. rRNA adenine N(6)-methyltransferase family. RsmA subfamily.

It is found in the cytoplasm. Specifically dimethylates two adjacent adenosines in the loop of a conserved hairpin near the 3'-end of 16S rRNA in the 30S particle. May play a critical role in biogenesis of 30S subunits. The polypeptide is Probable ribosomal RNA small subunit methyltransferase A (Halobacterium salinarum (strain ATCC 29341 / DSM 671 / R1)).